A 129-amino-acid chain; its full sequence is uncharacterized protein (129 aa).

C2H2-type zinc fingers lie at residues 75-99 (FVCP…YTEH) and 101-124 (KVCP…CKKH).

Its function is as follows. Essential for virus function. This is an uncharacterized protein from Saccharolobus solfataricus (Sulfolobus solfataricus).